A 1094-amino-acid polypeptide reads, in one-letter code: Probable serine/threonine-protein kinase kinX (1094 aa).

A Protein kinase domain is found at Leu22 to Leu281. ATP is bound by residues Ile28–Val36 and Lys49. Residue Asp146 is the Proton acceptor of the active site. Disordered stretches follow at residues Thr301–Asp884 and Ile946–Lys1083. The segment covering Tyr330 to Asp344 has biased composition (acidic residues). The span at Ser351–Gly373 shows a compositional bias: polar residues. Over residues Gln374–Gln387 the composition is skewed to low complexity. The segment covering Asp393–Asp408 has biased composition (acidic residues). The span at Asp410–Glu424 shows a compositional bias: basic and acidic residues. Composition is skewed to acidic residues over residues Ser433–Gln454, Asp480–Glu496, and Asp503–Glu523. Low complexity-rich tracts occupy residues Ile526–Gln542 and Arg564–Gln585. Residues Tyr587–Asp602 show a composition bias toward acidic residues. Basic and acidic residues predominate over residues Asp603–Gln639. Residues Gln650–Gln661 are compositionally biased toward low complexity. Residues Pro670–Glu801 show a composition bias toward basic and acidic residues. The tract at residues Val676–Val978 is 40 X 9 AA approximate repeats of V-K-V-E-E-P-V-E-E. Residues Pro802–Val816 are compositionally biased toward acidic residues. 2 stretches are compositionally biased toward basic and acidic residues: residues Glu817 to Asp884 and Ile946 to Lys971. Low complexity-rich tracts occupy residues Val972 to Gln985 and Val992 to Pro1011. The span at Val1016–Ile1031 shows a compositional bias: polar residues. The segment covering Lys1032–Lys1050 has biased composition (low complexity).

Belongs to the protein kinase superfamily. TKL Ser/Thr protein kinase family.

The catalysed reaction is L-seryl-[protein] + ATP = O-phospho-L-seryl-[protein] + ADP + H(+). It carries out the reaction L-threonyl-[protein] + ATP = O-phospho-L-threonyl-[protein] + ADP + H(+). In Dictyostelium discoideum (Social amoeba), this protein is Probable serine/threonine-protein kinase kinX (kinX).